Reading from the N-terminus, the 88-residue chain is Sec-independent protein translocase protein TatA (88 aa).

A helical membrane pass occupies residues 1 to 21 (MGGASIWHWIVVGVIVMLLFG). The interval 62–88 (TEPVRTLPPHPTEPAPATHATVDRKVV) is disordered.

Belongs to the TatA/E family. In terms of assembly, the Tat system comprises two distinct complexes: a TatABC complex, containing multiple copies of TatA, TatB and TatC subunits, and a separate TatA complex, containing only TatA subunits. Substrates initially bind to the TatABC complex, which probably triggers association of the separate TatA complex to form the active translocon.

The protein resides in the cell inner membrane. Its function is as follows. Part of the twin-arginine translocation (Tat) system that transports large folded proteins containing a characteristic twin-arginine motif in their signal peptide across membranes. TatA could form the protein-conducting channel of the Tat system. This Methylobacterium sp. (strain 4-46) protein is Sec-independent protein translocase protein TatA.